A 474-amino-acid polypeptide reads, in one-letter code: Glutamine synthetase (474 aa).

The GS beta-grasp domain occupies 14 to 99; it reads EKIELIDLKF…VCSIKEPRTG (86 aa). The region spanning 106-474 is the GS catalytic domain; it reads PRVIAQKAID…PYEFSIYYDV (369 aa). 2 residues coordinate Mg(2+): Glu131 and Glu133. Position 211 (Glu211) interacts with ATP. Residues Glu216 and Glu224 each coordinate Mg(2+). L-glutamate is bound by residues 268-269 and Gly269; that span reads NG. His273 is a Mg(2+) binding site. ATP contacts are provided by residues 275 to 277 and Ser277; that span reads HQS. Arg325, Glu331, and Arg343 together coordinate L-glutamate. ATP contacts are provided by Arg343, Arg348, and Lys357. Position 362 (Glu362) interacts with Mg(2+). Arg364 provides a ligand contact to L-glutamate. Residue Tyr402 is modified to O-AMP-tyrosine.

This sequence belongs to the glutamine synthetase family. In terms of assembly, oligomer of 12 subunits arranged in the form of two hexagons. Mg(2+) serves as cofactor.

It is found in the cytoplasm. The enzyme catalyses L-glutamate + NH4(+) + ATP = L-glutamine + ADP + phosphate + H(+). With respect to regulation, the activity of this enzyme could be controlled by adenylation under conditions of abundant glutamine. Its function is as follows. Involved in nitrogen metabolism via ammonium assimilation. Catalyzes the ATP-dependent biosynthesis of glutamine from glutamate and ammonia. This chain is Glutamine synthetase, found in Nostoc sp. (strain PCC 7120 / SAG 25.82 / UTEX 2576).